A 310-amino-acid chain; its full sequence is MTVPPPLVVITGPTATGKTEVGINVALACGGEIVSADSMMVYRGMDIGTAKPSASEMRGVPHHLIDVVDPDEEFNVARYQQLAGEAIVGILGRKRVPLLVGGTGLYIRSVVEDYRFPVRADRRLRNRLQEAAELYGCARLHRHLAVVDPVTARRLHPNDQRRIIRALEVYYQSGIPFSRYPDRRDRAPKYLPVMFGLNMERGRLYRRIEDRVDAMIRAGLVREVQSLLEKGYGPELVAMKGLGYKEIAAHLRGSLTLEEAIHILKRNTRRFAKRQLTWFRRDEQIRWLDVEECGGPVGAAREIVGSIEQE.

Position 12-19 (12-19 (GPTATGKT)) interacts with ATP. Residue 14–19 (TATGKT) coordinates substrate. Residues 37–40 (DSMM) are interaction with substrate tRNA.

This sequence belongs to the IPP transferase family. In terms of assembly, monomer. Mg(2+) is required as a cofactor.

The enzyme catalyses adenosine(37) in tRNA + dimethylallyl diphosphate = N(6)-dimethylallyladenosine(37) in tRNA + diphosphate. In terms of biological role, catalyzes the transfer of a dimethylallyl group onto the adenine at position 37 in tRNAs that read codons beginning with uridine, leading to the formation of N6-(dimethylallyl)adenosine (i(6)A). In Desulforudis audaxviator (strain MP104C), this protein is tRNA dimethylallyltransferase.